Here is a 120-residue protein sequence, read N- to C-terminus: MMHHLIQEITKEQLRTDLPDFRPGDTVRVHVKVVEGNRERIQVFEGVVIKRRGAGISENVHGPQSVLWRPALSAHSRVHTPKIAKLEVIRRGKVRRAKLYYLRELRGKAARIKENTNAAQ.

It belongs to the bacterial ribosomal protein bL19 family.

This protein is located at the 30S-50S ribosomal subunit interface and may play a role in the structure and function of the aminoacyl-tRNA binding site. This is Large ribosomal subunit protein bL19 from Geobacillus kaustophilus (strain HTA426).